Here is a 313-residue protein sequence, read N- to C-terminus: UDP-N-acetylenolpyruvoylglucosamine reductase (313 aa).

Positions 31-207 (VGGPADALVA…TGVDLGLGFD (177 aa)) constitute an FAD-binding PCMH-type domain. Residue Arg180 is part of the active site. The active-site Proton donor is the Cys236. The active site involves Glu307.

It belongs to the MurB family. The cofactor is FAD.

It localises to the cytoplasm. The catalysed reaction is UDP-N-acetyl-alpha-D-muramate + NADP(+) = UDP-N-acetyl-3-O-(1-carboxyvinyl)-alpha-D-glucosamine + NADPH + H(+). It functions in the pathway cell wall biogenesis; peptidoglycan biosynthesis. Functionally, cell wall formation. The chain is UDP-N-acetylenolpyruvoylglucosamine reductase from Desulfosudis oleivorans (strain DSM 6200 / JCM 39069 / Hxd3) (Desulfococcus oleovorans).